Reading from the N-terminus, the 311-residue chain is Putative UPF0607 protein ENSP00000382826 (311 aa).

The segment covering 48–61 (AEEPKEATEVKDQV) has biased composition (basic and acidic residues). Disordered regions lie at residues 48–99 (AEEP…WYNP), 186–229 (GLLM…PLQL), and 291–311 (RKQL…GSCL). Positions 78-97 (EAASTSRPLETQGNLTSSWY) are enriched in polar residues. Basic residues-rich tracts occupy residues 213-222 (AGHRSRKRKL) and 291-305 (RKQL…RQGR).

This sequence belongs to the UPF0607 family.

The chain is Putative UPF0607 protein ENSP00000382826 from Homo sapiens (Human).